The chain runs to 228 residues: Tol-Pal system protein TolQ (228 aa).

3 helical membrane passes run Ile16–Ile36, Val137–Leu157, and Ile172–Ala192.

It belongs to the ExbB/TolQ family. In terms of assembly, the Tol-Pal system is composed of five core proteins: the inner membrane proteins TolA, TolQ and TolR, the periplasmic protein TolB and the outer membrane protein Pal. They form a network linking the inner and outer membranes and the peptidoglycan layer.

Its subcellular location is the cell inner membrane. In terms of biological role, part of the Tol-Pal system, which plays a role in outer membrane invagination during cell division and is important for maintaining outer membrane integrity. The sequence is that of Tol-Pal system protein TolQ from Haemophilus influenzae (strain ATCC 51907 / DSM 11121 / KW20 / Rd).